Reading from the N-terminus, the 346-residue chain is Iron uptake protein A2 (346 aa).

The tat-type signal signal peptide spans 1–31 (MTTKISRRTFFVGGTALTALVVANLPRRASA). Positions 43, 44, 169, 225, and 226 each coordinate Fe cation.

The protein belongs to the bacterial solute-binding protein 1 family. Predicted to be exported by the Tat system. The position of the signal peptide cleavage has not been experimentally proven.

It localises to the cellular thylakoid membrane. It is found in the periplasm. In terms of biological role, probably part of a periplasmic ABC transporter complex futA1A2BC (TC 3.A.1.10.2) involved in Fe(3+) ion import (ferric iron). This protein and futA1 (slr1295) are subunit proteins that have redundant or overlapping substrate-binding functions. The differing subcellular locations of futA1 (predominantly thylakoid lumen) and futA2 (predominantly periplasmic) suggest they may fulfill different roles. Plays an important role in protecting the acceptor side of photosystem II (PSII) against oxidative damage, especially under iron-limiting growth conditions. Its function is as follows. Plays an undefined role in copper supply to thylakoid proteins. The protein is Iron uptake protein A2 (futA2) of Synechocystis sp. (strain ATCC 27184 / PCC 6803 / Kazusa).